We begin with the raw amino-acid sequence, 348 residues long: Competence protein ComGA (348 aa).

Residue 145 to 152 (GATGSGKT) coordinates ATP.

Belongs to the GSP E family.

It localises to the cell membrane. Required for uptake of DNA by competent cells. The sequence is that of Competence protein ComGA (comGA) from Halalkalibacterium halodurans (strain ATCC BAA-125 / DSM 18197 / FERM 7344 / JCM 9153 / C-125) (Bacillus halodurans).